Consider the following 451-residue polypeptide: MVSLQQLTISILLLFTASVQSLDINVDDKDSICSAAKYVVQGIWNYYEGLKYGGTVGMFAPPNYWWNAGEAFGGLVDFYTYCQSDNSTLEKLIYNGMYHQAGENYNYIPSNQSMTEGNDDQGVWGMAIMEAVERNFTEPESHSWLEMVQAVFNTMNARWDADNCGGGLRWQIFTWNSGYDYKNSISNGCLFHLAARLARYTGNSSVYVDTAEKVWKWMEDVGFLTEEDNGDVRIYDGAKITNNCSSVTDLRWSYTYGVFMAGCAYLYNFTGDDVWLTRTNEIVQASLSYFFANKIMQETTCQPQNKCNNDQRSFRCLFSRCLGLTTQLAPETKDRIREVLEASAEGAAKSCSGGSDGVTCGENWAIDKWDGVYGLGEQTSALEVMMALIVEPPLSVKTGGTNRTDYSAGTNSEDNANKNELTITGKDKAGAGVLTAIVLAVILGGAIWMIF.

Residues 1–21 (MVSLQQLTISILLLFTASVQS) form the signal peptide. Asn86, Asn111, Asn135, Asn203, Asn243, Asn268, and Asn402 each carry an N-linked (GlcNAc...) asparagine glycan. Ala429 carries the GPI-anchor amidated alanine lipid modification. Positions 430–451 (GAGVLTAIVLAVILGGAIWMIF) are cleaved as a propeptide — removed in mature form.

The protein belongs to the glycosyl hydrolase 76 family. The GPI-anchor is attached to the protein in the endoplasmic reticulum and serves to target the protein to the cell surface. There, the glucosamine-inositol phospholipid moiety is cleaved off and the GPI-modified mannoprotein is covalently attached via its lipidless GPI glycan remnant to the 1,6-beta-glucan of the outer cell wall layer. In terms of processing, N-mannosylated.

It localises to the secreted. The protein resides in the cell wall. Its subcellular location is the cell membrane. It carries out the reaction Random hydrolysis of (1-&gt;6)-alpha-D-mannosidic linkages in unbranched (1-&gt;6)-mannans.. Its function is as follows. Required for normal synthesis of the cell wall and alkaline pH-induced hypha formation. The chain is Mannan endo-1,6-alpha-mannosidase DFG5 (DFG5) from Candida albicans (strain SC5314 / ATCC MYA-2876) (Yeast).